We begin with the raw amino-acid sequence, 457 residues long: L-asparaginase-like protein GL17509 (457 aa).

The first 20 residues, 1-20 (MRYLCRAQLLSLLLLPLLKA), serve as a signal peptide directing secretion. Intrachain disulfides connect cysteine 72–cysteine 78, cysteine 172–cysteine 188, and cysteine 327–cysteine 354.

This sequence belongs to the Ntn-hydrolase family.

The protein is L-asparaginase-like protein GL17509 of Drosophila persimilis (Fruit fly).